Consider the following 238-residue polypeptide: Uridylate kinase (238 aa).

An ATP-binding site is contributed by 10–13 (KFSG). Positions 18–23 (GENGFG) are involved in allosteric activation by GTP. G52 provides a ligand contact to UMP. 2 residues coordinate ATP: G53 and R57. Residues D73 and 134-141 (TGNPFFTT) contribute to the UMP site. Positions 161, 167, and 170 each coordinate ATP.

Belongs to the UMP kinase family. Homohexamer.

The protein localises to the cytoplasm. It catalyses the reaction UMP + ATP = UDP + ADP. It participates in pyrimidine metabolism; CTP biosynthesis via de novo pathway; UDP from UMP (UMPK route): step 1/1. With respect to regulation, allosterically activated by GTP. Inhibited by UTP. Its function is as follows. Catalyzes the reversible phosphorylation of UMP to UDP. In Campylobacter concisus (strain 13826), this protein is Uridylate kinase.